Consider the following 345-residue polypeptide: Anthranilate phosphoribosyltransferase (345 aa).

Residues Gly-84, 87–88 (GD), Thr-92, 94–97 (NIST), 112–120 (KHGNRSVSS), and Ser-124 each bind 5-phospho-alpha-D-ribose 1-diphosphate. Anthranilate is bound at residue Gly-84. Ser-96 is a binding site for Mg(2+). Residue Asn-115 participates in anthranilate binding. Arg-170 contacts anthranilate. Mg(2+) is bound by residues Asp-229 and Glu-230.

This sequence belongs to the anthranilate phosphoribosyltransferase family. As to quaternary structure, homodimer. Mg(2+) serves as cofactor.

It catalyses the reaction N-(5-phospho-beta-D-ribosyl)anthranilate + diphosphate = 5-phospho-alpha-D-ribose 1-diphosphate + anthranilate. Its pathway is amino-acid biosynthesis; L-tryptophan biosynthesis; L-tryptophan from chorismate: step 2/5. Functionally, catalyzes the transfer of the phosphoribosyl group of 5-phosphorylribose-1-pyrophosphate (PRPP) to anthranilate to yield N-(5'-phosphoribosyl)-anthranilate (PRA). The chain is Anthranilate phosphoribosyltransferase from Xanthomonas euvesicatoria pv. vesicatoria (strain 85-10) (Xanthomonas campestris pv. vesicatoria).